Reading from the N-terminus, the 556-residue chain is 2-isopropylmalate synthase (556 aa).

Residues 33-307 (PIWCSSDLRD…NPELDFSDID (275 aa)) enclose the Pyruvate carboxyltransferase domain. Residues aspartate 42, histidine 246, histidine 248, and asparagine 282 each contribute to the Mg(2+) site. The interval 439-556 (ANTPYALISH…SLSQAQAKAA (118 aa)) is regulatory domain.

The protein belongs to the alpha-IPM synthase/homocitrate synthase family. LeuA type 2 subfamily. In terms of assembly, homodimer. It depends on Mg(2+) as a cofactor.

It is found in the cytoplasm. The catalysed reaction is 3-methyl-2-oxobutanoate + acetyl-CoA + H2O = (2S)-2-isopropylmalate + CoA + H(+). Its pathway is amino-acid biosynthesis; L-leucine biosynthesis; L-leucine from 3-methyl-2-oxobutanoate: step 1/4. Its function is as follows. Catalyzes the condensation of the acetyl group of acetyl-CoA with 3-methyl-2-oxobutanoate (2-ketoisovalerate) to form 3-carboxy-3-hydroxy-4-methylpentanoate (2-isopropylmalate). The protein is 2-isopropylmalate synthase of Pseudomonas syringae pv. tomato (strain ATCC BAA-871 / DC3000).